A 54-amino-acid chain; its full sequence is Potassium channel toxin alpha-KTx 14.x (54 aa).

The first 23 residues, 1-23 (MKIFFAILLILAVCSMAIWTVNG), serve as a signal peptide directing secretion. 3 disulfide bridges follow: Cys30–Cys46, Cys36–Cys51, and Cys40–Cys53.

The protein belongs to the short scorpion toxin superfamily. Potassium channel inhibitor family. Alpha-KTx 14 subfamily. In terms of tissue distribution, expressed by the venom gland.

Its subcellular location is the secreted. Its function is as follows. Potassium channels inhibitor. The protein is Potassium channel toxin alpha-KTx 14.x of Olivierus martensii (Manchurian scorpion).